The primary structure comprises 629 residues: tRNA uridine 5-carboxymethylaminomethyl modification enzyme MnmG (629 aa).

13-18 (GGGHAG) lines the FAD pocket. 273 to 287 (GPRYCPSIEDKVMRF) is an NAD(+) binding site.

Belongs to the MnmG family. Homodimer. Heterotetramer of two MnmE and two MnmG subunits. FAD is required as a cofactor.

The protein localises to the cytoplasm. Its function is as follows. NAD-binding protein involved in the addition of a carboxymethylaminomethyl (cmnm) group at the wobble position (U34) of certain tRNAs, forming tRNA-cmnm(5)s(2)U34. This is tRNA uridine 5-carboxymethylaminomethyl modification enzyme MnmG from Photorhabdus laumondii subsp. laumondii (strain DSM 15139 / CIP 105565 / TT01) (Photorhabdus luminescens subsp. laumondii).